Here is a 479-residue protein sequence, read N- to C-terminus: Something about silencing protein 10 (479 aa).

Residues 1-10 show a composition bias toward basic residues; the sequence is MVGRSRRRGA. 2 disordered regions span residues 1 to 45 and 62 to 166; these read MVGR…SYYQ and KGWN…EEAQ. Position 8 is an omega-N-methylarginine (arginine 8). A compositionally biased stretch (low complexity) spans 11 to 21; sequence AKWAAVRAKAG. Position 37 is a phosphoserine (serine 37). Over residues 69-111 the composition is skewed to acidic residues; it reads SGDEEDGEEEEEEVLALDMDDEDDEDGGNAGEEEEEENADDDG. Lysine 144 is modified (N6-acetyllysine; alternate). Residue lysine 144 forms a Glycyl lysine isopeptide (Lys-Gly) (interchain with G-Cter in SUMO2); alternate linkage. At serine 150 the chain carries Phosphoserine. Acidic residues predominate over residues 153-165; sequence EAEEEEREEEEEA. Threonine 362 carries the post-translational modification Phosphothreonine. Serine 365 and serine 368 each carry phosphoserine. At arginine 385 the chain carries Citrulline. A disordered region spans residues 419–466; the sequence is RGLTPRRKKIDRNPRVKHREKFRRAKIRRRGQVREVRKEEQRYSGELS. Residues 422–449 are compositionally biased toward basic residues; that stretch reads TPRRKKIDRNPRVKHREKFRRAKIRRRG. A compositionally biased stretch (basic and acidic residues) spans 450-461; sequence QVREVRKEEQRY.

Belongs to the SAS10 family. As to quaternary structure, part of the small subunit (SSU) processome, composed of more than 70 proteins and the RNA chaperone small nucleolar RNA (snoRNA) U3. In terms of processing, citrullinated by PADI4.

The protein localises to the nucleus. The protein resides in the nucleolus. Functionally, essential for gene silencing: has a role in the structure of silenced chromatin. Plays a role in the developing brain. Part of the small subunit (SSU) processome, first precursor of the small eukaryotic ribosomal subunit. During the assembly of the SSU processome in the nucleolus, many ribosome biogenesis factors, an RNA chaperone and ribosomal proteins associate with the nascent pre-rRNA and work in concert to generate RNA folding, modifications, rearrangements and cleavage as well as targeted degradation of pre-ribosomal RNA by the RNA exosome. The sequence is that of Something about silencing protein 10 from Homo sapiens (Human).